The chain runs to 308 residues: KH domain-containing protein At4g26480 (308 aa).

The segment at 1 to 26 (MMMMTSLGGGAGGGGGGGGSGGGRFV) is disordered. The span at 7–24 (LGGGAGGGGGGGGSGGGR) shows a compositional bias: gly residues. The KH domain maps to 165-232 (DIPVDKYPNY…EHLNEPLHIL (68 aa)). Residues 284–308 (EEGSPMSGSISPYNSLGMKRAKTRG) are disordered. Serine 294 is subject to Phosphoserine.

It localises to the nucleus. The polypeptide is KH domain-containing protein At4g26480 (Arabidopsis thaliana (Mouse-ear cress)).